A 526-amino-acid chain; its full sequence is Peptide chain release factor 3 (526 aa).

A tr-type G domain is found at 9-277 (DKRRTFAIIS…GIVEWAPKPL (269 aa)). Residues 18–25 (SHPDAGKT), 86–90 (DTPGH), and 140–143 (NKLD) each bind GTP.

Belongs to the TRAFAC class translation factor GTPase superfamily. Classic translation factor GTPase family. PrfC subfamily.

Its subcellular location is the cytoplasm. Increases the formation of ribosomal termination complexes and stimulates activities of RF-1 and RF-2. It binds guanine nucleotides and has strong preference for UGA stop codons. It may interact directly with the ribosome. The stimulation of RF-1 and RF-2 is significantly reduced by GTP and GDP, but not by GMP. The sequence is that of Peptide chain release factor 3 from Shewanella baltica (strain OS223).